The following is a 376-amino-acid chain: F-box/kelch-repeat protein At1g67480 (376 aa).

In terms of domain architecture, F-box spans 37 to 85 (DPLIPGLPDDVAKQCLALVPRARFPSMGSVCKKWRFVVQSKEFITVRRL). Kelch repeat units lie at residues 139–189 (KLLV…EVNG), 190–237 (HVYV…AFNG), 239–289 (LYVM…LFCI), and 291–335 (WKNH…LLFS).

This is F-box/kelch-repeat protein At1g67480 from Arabidopsis thaliana (Mouse-ear cress).